The sequence spans 203 residues: Adenosylcobalamin/alpha-ribazole phosphatase (203 aa).

The active-site Tele-phosphohistidine intermediate is His-8. Glu-81 serves as the catalytic Proton donor/acceptor.

Belongs to the phosphoglycerate mutase family.

It carries out the reaction adenosylcob(III)alamin 5'-phosphate + H2O = adenosylcob(III)alamin + phosphate. It catalyses the reaction alpha-ribazole 5'-phosphate + H2O = alpha-ribazole + phosphate. It participates in nucleoside biosynthesis; alpha-ribazole biosynthesis; alpha-ribazole from 5,6-dimethylbenzimidazole: step 2/2. Functionally, catalyzes the conversion of adenosylcobalamin 5'-phosphate to adenosylcobalamin (vitamin B12); involved in the assembly of the nucleotide loop of cobalamin. Also catalyzes the hydrolysis of the phospho group from alpha-ribazole 5'-phosphate to form alpha-ribazole. The protein is Adenosylcobalamin/alpha-ribazole phosphatase (cobC) of Escherichia coli (strain K12).